The chain runs to 130 residues: Small ribosomal subunit protein uS9 (130 aa).

This sequence belongs to the universal ribosomal protein uS9 family.

In Streptococcus thermophilus (strain CNRZ 1066), this protein is Small ribosomal subunit protein uS9.